The sequence spans 855 residues: E3 ubiquitin-protein ligase TRIM71 (855 aa).

Residue A2 is modified to N-acetylalanine. The segment at 12–94 (CLLCKEMCGS…ALKLRCPVCD (83 aa)) adopts an RING-type zinc-finger fold. Over residues 26–42 (SSSSSASSSSSQTSTSS) the composition is skewed to low complexity. Disordered stretches follow at residues 26-48 (SSSS…GGGP) and 126-177 (ADEP…SPGS). Gly residues predominate over residues 135–145 (RAGGGPGGAGG). Residues 147–157 (SNHRHHAHHPA) are compositionally biased toward basic residues. The B box-type 1; atypical zinc-finger motif lies at 181–228 (RRPHGCSSCDEGNAASSRCLDCQEHLCDNCVRAHQRVRLTKDHYIERG). A B box-type 2 zinc finger spans residues 260 to 301 (ERLGFCQHHDDEVLHLYCDTCSVPICRECTLGRHGGHSFAYL). Residues C265, H268, C288, and H293 each coordinate Zn(2+). A coiled-coil region spans residues 378 to 414 (QVKAKSLYLQVEKLRQNLNKLESTISAVQQVLEEGRA). A Filamin repeat occupies 466–567 (SSGAFAPLTK…IENSPFKVVV (102 aa)). NHL repeat units lie at residues 580-623 (VLSF…FKPC), 627-670 (HHKF…FTFE), 674-717 (LLKF…FGPD), 721-764 (LNKY…IHPD), 768-811 (ARFL…FEAN), and 815-855 (LCKF…ILIF).

This sequence belongs to the TRIM/RBCC family. Interacts (via NHL repeats) with AGO2; the interaction increases in presence of RNA. Interacts with HSP90AA1. Interacts (via NHL repeats) with MOV10, PABPC1, PUM1, PUM2, STAU2, XRN1 and XRN2 in an RNA-dependent manner. Interacts with SHCBP1; leading to enhance its stability. In terms of processing, autoubiquitinated.

Its subcellular location is the cytoplasm. The protein localises to the P-body. It carries out the reaction S-ubiquitinyl-[E2 ubiquitin-conjugating enzyme]-L-cysteine + [acceptor protein]-L-lysine = [E2 ubiquitin-conjugating enzyme]-L-cysteine + N(6)-ubiquitinyl-[acceptor protein]-L-lysine.. The protein operates within protein modification; protein ubiquitination. Functionally, E3 ubiquitin-protein ligase that cooperates with the microRNAs (miRNAs) machinery and promotes embryonic stem cells proliferation and maintenance. Binds to miRNAs and associates with AGO2, participating in post-transcriptional repression of transcripts such as CDKN1A. In addition, participates in post-transcriptional mRNA repression in a miRNA independent mechanism. Facilitates the G1-S transition to promote rapid embryonic stem cell self-renewal by repressing CDKN1A expression. Required to maintain proliferation and prevent premature differentiation of neural progenitor cells during early neural development: positively regulates FGF signaling by controlling the stability of SHCBP1. Specific regulator of miRNA biogenesis. Binds to miRNA MIR29A hairpin and postranscriptionally modulates MIR29A levels, which indirectly regulates TET proteins expression. The polypeptide is E3 ubiquitin-protein ligase TRIM71 (Trim71) (Rattus norvegicus (Rat)).